Reading from the N-terminus, the 95-residue chain is Co-chaperonin GroES (95 aa).

Belongs to the GroES chaperonin family. Heptamer of 7 subunits arranged in a ring. Interacts with the chaperonin GroEL.

It is found in the cytoplasm. Functionally, together with the chaperonin GroEL, plays an essential role in assisting protein folding. The GroEL-GroES system forms a nano-cage that allows encapsulation of the non-native substrate proteins and provides a physical environment optimized to promote and accelerate protein folding. GroES binds to the apical surface of the GroEL ring, thereby capping the opening of the GroEL channel. The chain is Co-chaperonin GroES from Rickettsia prowazekii (strain Madrid E).